The primary structure comprises 392 residues: Leucine-rich repeat-containing protein 74B (392 aa).

The disordered stretch occupies residues 24–46; it reads RLSGVPEAEQGPEANWDSDLETE. LRR repeat units lie at residues 106-129, 134-157, 162-185, 192-213, 220-241, 248-269, 276-297, 304-325, and 334-356; these read NPYV…ALAG, SSSI…ALCA, NQAM…HLAE, DLKS…TLGP, GLTE…AFAR, FLKV…AVGE, VLEE…SLGL, TLRI…GLLK, and ALEL…ASSV.

The polypeptide is Leucine-rich repeat-containing protein 74B (Homo sapiens (Human)).